The chain runs to 263 residues: Chaperone protein ClpE (263 aa).

An N-terminal signal peptide occupies residues 1–34 (MSKRNAVTTFFTNRVTKALGMTLALMMTCQSAMA). Over residues 238-255 (QKKTPTSSGQKASDSLVN) the composition is skewed to polar residues. The segment at 238–263 (QKKTPTSSGQKASDSLVNPSDKADKK) is disordered.

It belongs to the periplasmic pilus chaperone family.

The protein localises to the periplasm. Functionally, involved in the biogenesis of the CS31A capsule-like antigen. The protein is Chaperone protein ClpE (clpE) of Escherichia coli.